The primary structure comprises 190 residues: Ribose 1,5-bisphosphate phosphokinase PhnN (190 aa).

Positions 135 to 159 (RGREPEPGIGQRLARPDPAPGHQAD) are disordered.

The protein belongs to the ribose 1,5-bisphosphokinase family.

The catalysed reaction is alpha-D-ribose 1,5-bisphosphate + ATP = 5-phospho-alpha-D-ribose 1-diphosphate + ADP. It functions in the pathway metabolic intermediate biosynthesis; 5-phospho-alpha-D-ribose 1-diphosphate biosynthesis; 5-phospho-alpha-D-ribose 1-diphosphate from D-ribose 5-phosphate (route II): step 3/3. Its function is as follows. Catalyzes the phosphorylation of ribose 1,5-bisphosphate to 5-phospho-D-ribosyl alpha-1-diphosphate (PRPP). This is Ribose 1,5-bisphosphate phosphokinase PhnN from Pseudofrankia inefficax (strain DSM 45817 / CECT 9037 / DDB 130130 / EuI1c) (Frankia inefficax).